The following is a 147-amino-acid chain: MKLHELKPAQGSTKAPKRLGRGIGSGTGKTSGKGHKGQKARAGGGVRPGFEGGQQPLSRRMPKRGFTNIFKKEYVVLNVRDLEERFENGAVVGYESLFEVGLIKTIKDGVKILGTGELTKALTVQVDKVSQTAAEKIVAAGGKVEVE.

The segment at 1–62 is disordered; the sequence is MKLHELKPAQ…GQQPLSRRMP (62 aa). 2 stretches are compositionally biased toward gly residues: residues 21-31 and 42-52; these read RGIGSGTGKTS and AGGGVRPGFEG.

This sequence belongs to the universal ribosomal protein uL15 family. In terms of assembly, part of the 50S ribosomal subunit.

Functionally, binds to the 23S rRNA. The protein is Large ribosomal subunit protein uL15 of Desulfitobacterium hafniense (strain DSM 10664 / DCB-2).